Consider the following 1047-residue polypeptide: [F-actin]-monooxygenase MICAL1 (1047 aa).

The monooxygenase domain stretch occupies residues M1 to E489. FAD-binding positions include C95, E114–R116, R121–N123, F181, Y293, and D393. Phosphothreonine is present on T475. Residues S507 to K611 form the Calponin-homology (CH) domain. The residue at position 616 (S616) is a Phosphoserine. Positions R644–H672 are disordered. Positions V659–L668 are enriched in pro residues. The LIM zinc-binding domain maps to D679–K741. Zn(2+) is bound by residues C681, C684, H702, C705, C708, C711, C731, and H734. Disordered regions lie at residues D739–R787 and E849–L872. Polar residues predominate over residues N745–S767. Residues S777 and S781 each carry the phosphoserine modification. The segment covering G851–L868 has biased composition (acidic residues). Positions K905–V1047 constitute a bMERB domain. Residues F912–H996 adopt a coiled-coil conformation.

It belongs to the Mical family. As to quaternary structure, interacts with STK38 and STK38L. Associates with the SH3 domain of NEDD9. Interacts with VIM and PLXNA3. Interacts with RAB1B, RAB8A, RAB10, RAB13 and RAB15 (in their GTP-bound forms); binding to RAB1B is of low affinity compared to other Rab proteins; at least in case of RAB8A and RAB10 can bind 2 molecules of the Rab proteins simultaneously. Interacts with GRAF1/ARHGAP26, GRAF2/ARHGAP10, RAB8A, RAB8B and RAB10; may bind simultaneously to GRAFs and Rabs and connects GRAFs to Rabs. Does not interact with RAB1 and RAB11A. FAD is required as a cofactor.

Its subcellular location is the cytoplasm. It is found in the cytoskeleton. It localises to the endosome membrane. The protein localises to the midbody. It catalyses the reaction L-methionyl-[F-actin] + NADPH + O2 + H(+) = L-methionyl-(R)-S-oxide-[F-actin] + NADP(+) + H2O. It carries out the reaction NADPH + O2 + H(+) = H2O2 + NADP(+). Monooxygenase that promotes depolymerization of F-actin by mediating oxidation of specific methionine residues on actin to form methionine-sulfoxide, resulting in actin filament disassembly and preventing repolymerization. In the absence of actin, it also functions as a NADPH oxidase producing H(2)O(2). Acts as a cytoskeletal regulator that connects NEDD9 to intermediate filaments. Also acts as a negative regulator of apoptosis via its interaction with STK38 and STK38L; acts by antagonizing STK38 and STK38L activation by MST1/STK4. Involved in regulation of lamina-specific connectivity in the nervous system such as the development of lamina-restricted hippocampal connections. Through redox regulation of the actin cytoskeleton controls the intracellular distribution of secretory vesicles containing L1/neurofascin/NgCAM family proteins in neurons, thereby regulating their cell surface levels. May act as Rab effector protein and play a role in vesicle trafficking. Promotes endosomal tubule extension by associating with RAB8 (RAB8A or RAB8B), RAB10 and GRAF (GRAF1/ARHGAP26 or GRAF2/ARHGAP10) on the endosomal membrane which may connect GRAFs to Rabs, thereby participating in neosynthesized Rab8-Rab10-Rab11-dependent protein export. The polypeptide is [F-actin]-monooxygenase MICAL1 (Mical1) (Rattus norvegicus (Rat)).